The following is a 76-amino-acid chain: Cytochrome c oxidase subunit 6C-1 (76 aa).

At 2 to 10 (SLAKPAMRG) the chain is on the mitochondrial matrix side. The chain crosses the membrane as a helical span at residues 11–51 (LLGKRLRFHLPIAFTLSLVAALGFKYGVTEPRKQAYADFYK). Residues 52–76 (QYDAVKDFNAMREAGIFESVRPSGE) lie on the Mitochondrial intermembrane side of the membrane.

Belongs to the cytochrome c oxidase subunit 6c family. Component of the cytochrome c oxidase (complex IV, CIV), a multisubunit enzyme composed of 14 subunits. The complex is composed of a catalytic core of 3 subunits MT-CO1, MT-CO2 and MT-CO3, encoded in the mitochondrial DNA, and 11 supernumerary subunits COX4I, COX5A, COX5B, COX6A, COX6B, COX6C, COX7A, COX7B, COX7C, COX8 and NDUFA4, which are encoded in the nuclear genome. The complex exists as a monomer or a dimer and forms supercomplexes (SCs) in the inner mitochondrial membrane with NADH-ubiquinone oxidoreductase (complex I, CI) and ubiquinol-cytochrome c oxidoreductase (cytochrome b-c1 complex, complex III, CIII), resulting in different assemblies (supercomplex SCI(1)III(2)IV(1) and megacomplex MCI(2)III(2)IV(2)).

It localises to the mitochondrion inner membrane. Its pathway is energy metabolism; oxidative phosphorylation. Its function is as follows. Component of the cytochrome c oxidase, the last enzyme in the mitochondrial electron transport chain which drives oxidative phosphorylation. The respiratory chain contains 3 multisubunit complexes succinate dehydrogenase (complex II, CII), ubiquinol-cytochrome c oxidoreductase (cytochrome b-c1 complex, complex III, CIII) and cytochrome c oxidase (complex IV, CIV), that cooperate to transfer electrons derived from NADH and succinate to molecular oxygen, creating an electrochemical gradient over the inner membrane that drives transmembrane transport and the ATP synthase. Cytochrome c oxidase is the component of the respiratory chain that catalyzes the reduction of oxygen to water. Electrons originating from reduced cytochrome c in the intermembrane space (IMS) are transferred via the dinuclear copper A center (CU(A)) of subunit 2 and heme A of subunit 1 to the active site in subunit 1, a binuclear center (BNC) formed by heme A3 and copper B (CU(B)). The BNC reduces molecular oxygen to 2 water molecules using 4 electrons from cytochrome c in the IMS and 4 protons from the mitochondrial matrix. The polypeptide is Cytochrome c oxidase subunit 6C-1 (Thunnus obesus (Bigeye tuna)).